The sequence spans 145 residues: D-aminoacyl-tRNA deacylase (145 aa).

Positions 137 to 138 match the Gly-cisPro motif, important for rejection of L-amino acids motif; it reads GP.

The protein belongs to the DTD family. In terms of assembly, homodimer.

It localises to the cytoplasm. It carries out the reaction glycyl-tRNA(Ala) + H2O = tRNA(Ala) + glycine + H(+). The enzyme catalyses a D-aminoacyl-tRNA + H2O = a tRNA + a D-alpha-amino acid + H(+). An aminoacyl-tRNA editing enzyme that deacylates mischarged D-aminoacyl-tRNAs. Also deacylates mischarged glycyl-tRNA(Ala), protecting cells against glycine mischarging by AlaRS. Acts via tRNA-based rather than protein-based catalysis; rejects L-amino acids rather than detecting D-amino acids in the active site. By recycling D-aminoacyl-tRNA to D-amino acids and free tRNA molecules, this enzyme counteracts the toxicity associated with the formation of D-aminoacyl-tRNA entities in vivo and helps enforce protein L-homochirality. The chain is D-aminoacyl-tRNA deacylase from Deinococcus radiodurans (strain ATCC 13939 / DSM 20539 / JCM 16871 / CCUG 27074 / LMG 4051 / NBRC 15346 / NCIMB 9279 / VKM B-1422 / R1).